A 501-amino-acid chain; its full sequence is CUGBP Elav-like family member 1 (501 aa).

The tract at residues 2-196 (NGSLDHPDQP…DTQKDKEQKR (195 aa)) is binds strongly to URE. RRM domains follow at residues 16 to 99 (IKMF…PADS) and 108 to 188 (RKLF…FADT). Low complexity-rich tracts occupy residues 274–298 (PTGSSALTTSSSPLSVLTSSGTPSG) and 312–323 (SSPTSSTSSSVN). Residues 274-323 (PTGSSALTTSSSPLSVLTSSGTPSGQPAQSAWDAYKAGSSPTSSTSSSVN) form a disordered region. The tract at residues 397-501 (LLSQQNVSAA…KRSKNDSKPY (105 aa)) is binds strongly to URE. Residues 416 to 494 (ANLFIYHLPQ…KRLKVQLKRS (79 aa)) form the RRM 3 domain.

Belongs to the CELF/BRUNOL family.

Its subcellular location is the nucleus. The protein localises to the cytoplasm. RNA-binding protein implicated in the regulation of several post-transcriptional events. May be involved in mRNA translation activation and stability. Involved in the regulation of muscle-specific splicing of alpha actinin pre-mRNAs via the binding to the UR-repeat element (URE) at the branch point of the non-muscle (NM) exon. This chain is CUGBP Elav-like family member 1 (celf1), found in Danio rerio (Zebrafish).